A 1090-amino-acid polypeptide reads, in one-letter code: Exoglucanase B (1090 aa).

The first 33 residues, 1 to 33 (MSSTTRRRSAWVAAATVGVSSFLAVAGITPAIA), serve as a signal peptide directing secretion. Positions 34-53 (AAGAGQPATVTVPAASPVRA) are excised as a propeptide. A catalytic region spans residues 54–699 (AVDGEYAQRF…RLFDDGTTTP (646 aa)). Catalysis depends on D513, which acts as the Nucleophile. Fibronectin type-III domains lie at 706-791 (VPTG…TKAT), 797-887 (APSV…TKSD), and 897-984 (VPAG…TKTP). Residues 983–1090 (TPQTGGSCSV…SFTLNGASCT (108 aa)) enclose the CBM2 domain. Residues C990 and C1089 are joined by a disulfide bond. Residues 1069–1090 (NGSHTGQNPNPASFTLNGASCT) are disordered. A compositionally biased stretch (polar residues) spans 1070–1090 (GSHTGQNPNPASFTLNGASCT).

This sequence belongs to the glycosyl hydrolase 48 (cellulase L) family.

It catalyses the reaction Hydrolysis of (1-&gt;4)-beta-D-glucosidic linkages in cellulose and cellotetraose, releasing cellobiose from the non-reducing ends of the chains.. Its function is as follows. Hydrolyzes cellohexaose to a mixture of cellotetraose, cellotriose and cellobiose, with only a trace of glucose. It hydrolyzed cellopentaose to cellotriose and cellobiose, and cellotetraose to cellobiose, but it did not hydrolyze cellotriose. Also has weak endoglucanase activity. Hydrolyzes glucosidic bonds with inversion of anomeric configuration. In Cellulomonas fimi (strain ATCC 484 / DSM 20113 / JCM 1341 / CCUG 24087 / LMG 16345 / NBRC 15513 / NCIMB 8980 / NCTC 7547 / NRS-133), this protein is Exoglucanase B (cbhB).